Consider the following 74-residue polypeptide: MLEGAKSIGAGAATIASAGAAIGIGNVFSSLIHSVARNPSLAKQSFGYAILGFALTEAIALFAPMMAFLILFVF.

A run of 2 helical transmembrane segments spans residues 8–28 (IGAG…GNVF) and 50–70 (ILGF…AFLI).

Belongs to the ATPase C chain family. As to quaternary structure, F-type ATPases have 2 components, CF(1) - the catalytic core - and CF(0) - the membrane proton channel. CF(1) has five subunits: alpha(3), beta(3), gamma(1), delta(1), epsilon(1). CF(0) has three main subunits: a, b and c.

The protein resides in the mitochondrion membrane. In terms of biological role, this protein is one of the chains of the nonenzymatic membrane component (F0) of mitochondrial ATPase. The sequence is that of ATP synthase subunit 9, mitochondrial (ATP9) from Brassica napus (Rape).